We begin with the raw amino-acid sequence, 300 residues long: Ribosomal RNA small subunit methyltransferase H (300 aa).

Residues 35–37 (GGH), aspartate 55, phenylalanine 82, aspartate 100, and glutamine 107 each bind S-adenosyl-L-methionine.

The protein belongs to the methyltransferase superfamily. RsmH family.

The protein resides in the cytoplasm. It carries out the reaction cytidine(1402) in 16S rRNA + S-adenosyl-L-methionine = N(4)-methylcytidine(1402) in 16S rRNA + S-adenosyl-L-homocysteine + H(+). In terms of biological role, specifically methylates the N4 position of cytidine in position 1402 (C1402) of 16S rRNA. This is Ribosomal RNA small subunit methyltransferase H from Chlamydia trachomatis serovar L2 (strain ATCC VR-902B / DSM 19102 / 434/Bu).